The sequence spans 148 residues: Protein-export protein SecB (148 aa).

This sequence belongs to the SecB family. In terms of assembly, homotetramer, a dimer of dimers. One homotetramer interacts with 1 SecA dimer.

Its subcellular location is the cytoplasm. In terms of biological role, one of the proteins required for the normal export of preproteins out of the cell cytoplasm. It is a molecular chaperone that binds to a subset of precursor proteins, maintaining them in a translocation-competent state. It also specifically binds to its receptor SecA. This is Protein-export protein SecB from Psychrobacter arcticus (strain DSM 17307 / VKM B-2377 / 273-4).